Here is a 157-residue protein sequence, read N- to C-terminus: Large ribosomal subunit protein uL11 (157 aa).

Belongs to the universal ribosomal protein uL11 family.

Its function is as follows. This protein binds directly to 26S ribosomal RNA. This chain is Large ribosomal subunit protein uL11 (RPL12), found in Chlamydomonas reinhardtii (Chlamydomonas smithii).